A 956-amino-acid chain; its full sequence is Translation initiation factor IF-2 (956 aa).

The tract at residues 33–370 (SHASSVEEAD…PVTERKFHEL (338 aa)) is disordered. A compositionally biased stretch (polar residues) spans 46–60 (IASSFSAGVTKNVQA). The span at 63-73 (AKDKQVAEQKA) shows a compositional bias: basic and acidic residues. Residues 76–100 (AKATTPQPAASKAAEKPAAATQEAS) are compositionally biased toward low complexity. Basic and acidic residues-rich tracts occupy residues 112 to 125 (FKAEREARAKEQVA), 134 to 143 (SNDRKSDYRQ), and 179 to 192 (NDGHRQAGNRDKNR). Residues 199-213 (RQQDTGRQGQTQAGA) show a composition bias toward low complexity. 2 stretches are compositionally biased toward basic and acidic residues: residues 234-258 (ARQRESRFREQEEAKRLEQQARQEA) and 266-276 (QTEDKKHREAS). Low complexity predominate over residues 277-293 (AKATESVASMAAASVAK). Over residues 303 to 320 (NRPDKGHDRDHGLEDGQK) the composition is skewed to basic and acidic residues. Residues 325 to 343 (SWNSQNQVRNQKNSNWNNN) show a composition bias toward low complexity. Residues 344–354 (KKNKKGKHHKN) show a composition bias toward basic residues. In terms of domain architecture, tr-type G spans 457 to 626 (ERAPVVTIMG…LLVAEVEELK (170 aa)). Residues 466–473 (GHVDHGKT) are G1. 466–473 (GHVDHGKT) contacts GTP. Residues 491–495 (GITQH) form a G2 region. The tract at residues 512-515 (DTPG) is G3. Residues 512-516 (DTPGH) and 566-569 (NKID) each bind GTP. Positions 566-569 (NKID) are G4. The segment at 602 to 604 (SAK) is G5.

Belongs to the TRAFAC class translation factor GTPase superfamily. Classic translation factor GTPase family. IF-2 subfamily.

It localises to the cytoplasm. Functionally, one of the essential components for the initiation of protein synthesis. Protects formylmethionyl-tRNA from spontaneous hydrolysis and promotes its binding to the 30S ribosomal subunits. Also involved in the hydrolysis of GTP during the formation of the 70S ribosomal complex. This is Translation initiation factor IF-2 from Streptococcus equi subsp. equi (strain 4047).